Reading from the N-terminus, the 607-residue chain is Kelch repeat and BTB domain-containing protein 3 (607 aa).

The 68-residue stretch at 48-115 (YDFKIIMKEE…AYTGKTRITD (68 aa)) folds into the BTB domain. The BACK domain occupies 150 to 250 (CLHLLSLSDS…QLSEDTLQDY (101 aa)). 5 Kelch repeats span residues 291–337 (KYIF…SSYG), 339–390 (KIFL…TPRT), 400–450 (RLFV…ACQN), 452–502 (IYVL…KAVP), and 548–595 (KIYI…VIQF).

The polypeptide is Kelch repeat and BTB domain-containing protein 3 (Mus musculus (Mouse)).